We begin with the raw amino-acid sequence, 412 residues long: uncharacterized protein (412 aa).

An N-terminal signal peptide occupies residues 1-21 (MIIPMLRILLIVLFVLNLVTS). 3 disordered regions span residues 85–134 (QPPA…STTT), 250–294 (STTE…TPGT), and 327–357 (VELG…HVRE). Residues 88-105 (ASLTSLPAAPPSAQVAPP) show a composition bias toward low complexity. Positions 124-134 (TPQASISSTTT) are enriched in polar residues. Composition is skewed to low complexity over residues 250-259 (STTENTTEQS) and 266-293 (TTST…GTPG). Acidic residues predominate over residues 330 to 347 (GEGDDDEENDDDSSEEEE). A compositionally biased stretch (basic and acidic residues) spans 348–357 (TKPPARHVRE). The ShKT domain maps to 371–408 (CDEEEDDKGKICKLWAAGGLCGTHKPTMFLFCRKTCLC).

This is an uncharacterized protein from Caenorhabditis elegans.